Reading from the N-terminus, the 209-residue chain is Tumor suppressor candidate gene 1 protein (209 aa).

3 disordered regions span residues 1–55, 111–157, and 172–209; these read MWRM…DGAR, ALRL…LRAR, and LHLEQRGPRPSGDKEEQPLQEPDSGLRSRDSEPSGPWL. Residues 14-47 show a composition bias toward gly residues; sequence CCGGDGAADGRGPGRSGRARGGGSPSGGGGGVGW. The stretch at 70-114 forms a coiled coil; the sequence is LEAIRARDEWDRQNARLRQENARLRLENRRLKRENRSLFRQALRL. Over residues 125-149 the composition is skewed to basic and acidic residues; it reads EARRVPEEASTNRRARDSGREDEPG. Ser150 carries the post-translational modification Phosphoserine. A coiled-coil region spans residues 152–177; it reads RALRARLEKLEAMYRRALLQLHLEQR. Over residues 174 to 188 the composition is skewed to basic and acidic residues; that stretch reads LEQRGPRPSGDKEEQ.

In terms of tissue distribution, widely expressed at low level. Expressed at higher level in testis, weakly expressed in muscle, colon, lung and spleen. Not detected in 3 non small cell lung carcinoma (NSCLC) cell lines with homozygous deletion of the 9p region, while it is down-regulated in 3 other tumor cell lines.

In Homo sapiens (Human), this protein is Tumor suppressor candidate gene 1 protein (TUSC1).